A 283-amino-acid polypeptide reads, in one-letter code: MRTQWPSPAKLNLFLYITGQRADGYHTLQTLFQFLDYGDTISIELRDDGDIRLLTPVEGVEHEDNLIVRAARLLMKTAADSGRLSTGSGANISIDKRLPMGGGLGGGSSNAATVLVALNHLWQCGLSMDELAEMGLTLGADVPVFVRGHAAFAEGVGEILMPVDPPEKWYLVAHPGVSIPTPVIFKDPELPRNTPKRSIETLLKCEFSNDCEVIARKRFREVDAVLSWLLEYAPSRLTGTGACVFAEFDTESEARQVLEQAPEWLNGFVAKGVNLSPLHRAML.

The active site involves Lys-10. Residue 99–109 (PMGGGLGGGSS) coordinates ATP. Asp-141 is a catalytic residue.

Belongs to the GHMP kinase family. IspE subfamily. Homodimer.

The catalysed reaction is 4-CDP-2-C-methyl-D-erythritol + ATP = 4-CDP-2-C-methyl-D-erythritol 2-phosphate + ADP + H(+). The protein operates within isoprenoid biosynthesis; isopentenyl diphosphate biosynthesis via DXP pathway; isopentenyl diphosphate from 1-deoxy-D-xylulose 5-phosphate: step 3/6. Functionally, catalyzes the phosphorylation of the position 2 hydroxy group of 4-diphosphocytidyl-2C-methyl-D-erythritol. This chain is 4-diphosphocytidyl-2-C-methyl-D-erythritol kinase (ispE), found in Escherichia coli O6:H1 (strain CFT073 / ATCC 700928 / UPEC).